The following is a 357-amino-acid chain: Protein RecA (357 aa).

Position 73 to 80 (73 to 80 (GPESSGKT)) interacts with ATP.

It belongs to the RecA family.

The protein resides in the cytoplasm. Its function is as follows. Can catalyze the hydrolysis of ATP in the presence of single-stranded DNA, the ATP-dependent uptake of single-stranded DNA by duplex DNA, and the ATP-dependent hybridization of homologous single-stranded DNAs. It interacts with LexA causing its activation and leading to its autocatalytic cleavage. The protein is Protein RecA of Nitratidesulfovibrio vulgaris (strain ATCC 29579 / DSM 644 / CCUG 34227 / NCIMB 8303 / VKM B-1760 / Hildenborough) (Desulfovibrio vulgaris).